A 99-amino-acid polypeptide reads, in one-letter code: NADH-quinone oxidoreductase subunit K (99 aa).

Transmembrane regions (helical) follow at residues 3–23 (PANY…GVLV), 28–48 (IVVF…LVTF), and 59–79 (IMAF…LAII).

This sequence belongs to the complex I subunit 4L family. In terms of assembly, NDH-1 is composed of 14 different subunits. Subunits NuoA, H, J, K, L, M, N constitute the membrane sector of the complex.

Its subcellular location is the cell membrane. It carries out the reaction a quinone + NADH + 5 H(+)(in) = a quinol + NAD(+) + 4 H(+)(out). Its function is as follows. NDH-1 shuttles electrons from NADH, via FMN and iron-sulfur (Fe-S) centers, to quinones in the respiratory chain. The immediate electron acceptor for the enzyme in this species is believed to be a menaquinone. Couples the redox reaction to proton translocation (for every two electrons transferred, four hydrogen ions are translocated across the cytoplasmic membrane), and thus conserves the redox energy in a proton gradient. The polypeptide is NADH-quinone oxidoreductase subunit K (Frankia casuarinae (strain DSM 45818 / CECT 9043 / HFP020203 / CcI3)).